The sequence spans 562 residues: Transcriptional adapter 2A (562 aa).

A ZZ-type zinc finger spans residues K91–Q146. Positions 96, 99, 110, 113, 119, 122, 132, and 136 each coordinate Zn(2+). One can recognise an SANT domain in the interval W154–Y198. One can recognise an SWIRM domain in the interval C471–G562.

As to quaternary structure, component of the Ada2a-containing (ATAC) complex composed of at least Ada2a, Atac1, Hcf, Ada3, Gcn5, Mocs2B, Charac-14, Atac3, Atac2, NC2beta and wds. Component of a complex that does not include Gcn5 or Ada3.

The protein localises to the nucleus. Its subcellular location is the chromosome. Its function is as follows. Component of the histone acetyltransferase (HAT) complex ATAC; predominantly involved in acetylation of histone H4, including at Lys-6 (H4K5ac) and Lys-13 (H4K12ac). May be part of several different complexes, including Gcn5-independent complexes involved in RNA polymerase II-dependent transcription. This is Transcriptional adapter 2A from Drosophila melanogaster (Fruit fly).